The chain runs to 199 residues: N-(5'-phosphoribosyl)anthranilate isomerase (199 aa).

This sequence belongs to the TrpF family.

The catalysed reaction is N-(5-phospho-beta-D-ribosyl)anthranilate = 1-(2-carboxyphenylamino)-1-deoxy-D-ribulose 5-phosphate. Its pathway is amino-acid biosynthesis; L-tryptophan biosynthesis; L-tryptophan from chorismate: step 3/5. In Streptococcus pneumoniae (strain ATCC BAA-255 / R6), this protein is N-(5'-phosphoribosyl)anthranilate isomerase.